Reading from the N-terminus, the 463-residue chain is Regulator of microtubule dynamics protein 3 (463 aa).

At 1-4 the chain is on the mitochondrial intermembrane side; that stretch reads MSKL. A helical transmembrane segment spans residues 5-27; the sequence is ILSYRIGLGLVVGAAAGAVIYIV. The Cytoplasmic portion of the chain corresponds to 28–463; the sequence is FRRNRKKTRK…PATAEEELLV (436 aa). An FFAT motif is present at residues 146 to 161; it reads IYFTATSGAAHTDAES. Residues 153–192 form a disordered region; that stretch reads GAAHTDAESEGGYSTAYAESDFERESSRASEAEEEDEVSC. Over residues 173 to 183 the composition is skewed to basic and acidic residues; sequence DFERESSRASE. Residues 279–302 are a coiled coil; sequence AEDAQEKKSFASEGKEEAEAALQK.

Belongs to the RMDN family. In terms of assembly, interacts with PTPN2. Interacts with microtubules. Interacts with VAPB. Interacts (FFAT motif) with MOSPD2 (via MSP domain).

It localises to the mitochondrion outer membrane. It is found in the cytoplasm. The protein localises to the nucleus. Its subcellular location is the cytoskeleton. The protein resides in the spindle. It localises to the spindle pole. Its function is as follows. Involved in cellular calcium homeostasis regulation. The polypeptide is Regulator of microtubule dynamics protein 3 (rmdn3) (Xenopus laevis (African clawed frog)).